A 175-amino-acid polypeptide reads, in one-letter code: Bifunctional protein PyrR (175 aa).

Substrate-binding positions include 40–41 (TR), 102–110 (DDVLYTGRT), Arg-135, and Val-159. The PRPP-binding signature appears at 98–110 (VVIIDDVLYTGRT).

Belongs to the purine/pyrimidine phosphoribosyltransferase family. PyrR subfamily. Homodimer and homohexamer; in equilibrium.

The catalysed reaction is UMP + diphosphate = 5-phospho-alpha-D-ribose 1-diphosphate + uracil. Its function is as follows. Regulates transcriptional attenuation of the pyrimidine nucleotide (pyr) operon by binding in a uridine-dependent manner to specific sites on pyr mRNA. This disrupts an antiterminator hairpin in the RNA and favors formation of a downstream transcription terminator, leading to a reduced expression of downstream genes. Functionally, also displays a weak uracil phosphoribosyltransferase activity which is not physiologically significant. This is Bifunctional protein PyrR from Staphylococcus epidermidis (strain ATCC 12228 / FDA PCI 1200).